Reading from the N-terminus, the 149-residue chain is Globin (149 aa).

The Globin domain occupies 2–149 (VLTKDEFDSL…KIFTGVAGQL (148 aa)). Residue H100 coordinates heme.

It belongs to the globin family. In terms of assembly, monomer.

Its function is as follows. Oxygen binding protein. This chain is Globin, found in Isoparorchis hypselobagri (Giant trematode).